Reading from the N-terminus, the 706-residue chain is Gamma-adducin (706 aa).

Residues Met1–Thr11 are compositionally biased toward low complexity. Positions Met1–Arg23 are disordered. At Ser2 the chain carries N-acetylserine. Residues Ser31, Ser42, Ser64, Ser402, Ser414, Ser423, Ser442, and Ser461 each carry the phosphoserine modification. Disordered regions lie at residues Ala471–Asn495, Pro534–His556, Gln574–Glu610, and Thr651–Ala706. A Glycyl lysine isopeptide (Lys-Gly) (interchain with G-Cter in SUMO2) cross-link involves residue Lys484. Residues Ser583, Ser585, and Ser590 each carry the phosphoserine modification. 2 stretches are compositionally biased toward low complexity: residues Ser590–Pro605 and Thr651–Ile662. Phosphoserine is present on residues Ser673, Ser677, Ser679, Ser681, and Ser683. The segment covering Pro682 to Ala706 has biased composition (basic residues). Positions Lys684 to Lys701 are interaction with calmodulin.

It belongs to the aldolase class II family. Adducin subfamily. In terms of assembly, heterodimer of an alpha and a gamma subunit. Sumoylated. Post-translationally, proteolytically cleaved by asparagine endopeptidase (AEP) into 2 fragments. Overexpression of the 1-357 fragment induces neuronal apoptosis, and overexpression of either 1-357 or 358-706 fragment increases the degeneration of dendritic spines. Overexpression of the 1-357 fragment impairs neurite outgrowth by downregulating the expression of Rac2, and induces synaptic dysfunction and cognitive impairments in tau P301S transgenic mice, a mouse model for Alzheimer disease (AD). In terms of tissue distribution, cleavage fragment 1-357 is expressed in the brain and the expression increases with age (at protein level). The fragment is expressed in the cortex, hippocampal CA1 region and hippocampal dentate gyrus in tau P301S transgenic mice, a mouse model for Alzheimer disease (AD) (at protein level). The fragment is only weakly expressed in non-transgenic mouse brain sections (at protein level).

The protein resides in the cytoplasm. It is found in the cytoskeleton. The protein localises to the cell membrane. In terms of biological role, membrane-cytoskeleton-associated protein that promotes the assembly of the spectrin-actin network. Plays a role in actin filament capping. Binds to calmodulin. Involved in myogenic reactivity of the renal afferent arteriole (Af-art), renal interlobular arteries and middle cerebral artery (MCA) to increased perfusion pressure. Involved in regulation of potassium channels in the vascular smooth muscle cells (VSMCs) of the Af-art and MCA ex vivo. Involved in regulation of glomerular capillary pressure, glomerular filtration rate (GFR) and glomerular nephrin expression in response to hypertension. Involved in renal blood flow (RBF) autoregulation. Plays a role in podocyte structure and function. Regulates globular monomer actin (G-actin) and filamentous polymer actin (F-actin) ratios in the primary podocytes affecting actin cytoskeleton organization. Regulates expression of synaptopodin, RhoA, Rac1 and CDC42 in the renal cortex and the primary podocytes. Regulates expression of nephrin in the glomeruli and in the primary podocytes, expression of nephrin and podocinin in the renal cortex, and expression of focal adhesion proteins integrin alpha-3 and integrin beta-1 in the glomeruli. Involved in cell migration and cell adhesion of podocytes, and in podocyte foot process effacement. Regulates expression of profibrotics markers MMP2, MMP9, TGF beta-1, tubular tight junction protein E-cadherin, and mesenchymal markers vimentin and alpha-SMA. Promotes the growth of neurites. The polypeptide is Gamma-adducin (Add3) (Mus musculus (Mouse)).